The sequence spans 355 residues: uncharacterized protein (355 aa).

The interval 1 to 104 (MGTKGLPLYP…EQAKTVQGGR (104 aa)) is disordered. An N6-acetyllysine modification is found at Lys19. A compositionally biased stretch (acidic residues) spans 45-54 (EEGTDLEGDM). Ser175 bears the Phosphoserine mark. 2 disordered regions span residues 247 to 310 (PRGS…AAYK) and 325 to 355 (SITS…GKKP). Tyr293 carries the post-translational modification Phosphotyrosine. Ser294 is modified (phosphoserine). The segment covering 325–334 (SITSLSSRTT) has biased composition (polar residues). The segment covering 336–348 (LPAADPFALAPFP) has biased composition (low complexity).

This is an uncharacterized protein from Homo sapiens (Human).